Consider the following 575-residue polypeptide: 2-isopropylmalate synthase (575 aa).

The Pyruvate carboxyltransferase domain maps to 31 to 305 (PTWLSTDLRD…APGLDFSDIA (275 aa)). Mg(2+)-binding residues include aspartate 40, histidine 244, histidine 246, and asparagine 280. The regulatory domain stretch occupies residues 437–575 (PVQASPDFSD…RFAGEEQGKG (139 aa)).

Belongs to the alpha-IPM synthase/homocitrate synthase family. LeuA type 2 subfamily. Homodimer. It depends on Mg(2+) as a cofactor.

Its subcellular location is the cytoplasm. The catalysed reaction is 3-methyl-2-oxobutanoate + acetyl-CoA + H2O = (2S)-2-isopropylmalate + CoA + H(+). It participates in amino-acid biosynthesis; L-leucine biosynthesis; L-leucine from 3-methyl-2-oxobutanoate: step 1/4. In terms of biological role, catalyzes the condensation of the acetyl group of acetyl-CoA with 3-methyl-2-oxobutanoate (2-ketoisovalerate) to form 3-carboxy-3-hydroxy-4-methylpentanoate (2-isopropylmalate). The polypeptide is 2-isopropylmalate synthase (Herbaspirillum seropedicae (strain SmR1)).